The primary structure comprises 532 residues: 4-amino-L-phenylalanyl-[CmlP-peptidyl-carrier-protein] 3-hydroxylase (532 aa).

Fe cation contacts are provided by His305, His307, Asp309, His310, Glu377, and Asp403.

It belongs to the metallo-beta-lactamase superfamily. As to quaternary structure, homodimer. The cofactor is Fe(2+).

It carries out the reaction 4-amino-L-phenylalanyl-[peptidyl-carrier protein] + AH2 + O2 = (2R)-2-(4-aminophenyl)-L-seryl-[peptidyl-carrier protein] + A + H2O. It participates in antibiotic biosynthesis. In terms of biological role, involved in chloramphenicol biosynthesis. Catalyzes the beta-hydroxylation of 4-amino-L-phenylalanine (L-PAPA) covalently bound to CmlP to form L-p-aminophenylserine. This Streptomyces venezuelae (strain ATCC 10712 / CBS 650.69 / DSM 40230 / JCM 4526 / NBRC 13096 / PD 04745) protein is 4-amino-L-phenylalanyl-[CmlP-peptidyl-carrier-protein] 3-hydroxylase.